The chain runs to 336 residues: Ketol-acid reductoisomerase (NADP(+)) (336 aa).

Residues 1-181 (MNVYYDKDCN…GGGRTGIIET (181 aa)) form the KARI N-terminal Rossmann domain. Residues 24-27 (YGSQ), Arg-47, Ser-50, Ser-52, and 82-85 (DEFQ) contribute to the NADP(+) site. Residue His-107 is part of the active site. Gly-133 provides a ligand contact to NADP(+). The region spanning 182-327 (TFQDETETDL…GKLRSMMPWI (146 aa)) is the KARI C-terminal knotted domain. Positions 190, 194, 226, and 230 each coordinate Mg(2+). Residue Ser-251 coordinates substrate.

It belongs to the ketol-acid reductoisomerase family. The cofactor is Mg(2+).

It carries out the reaction (2R)-2,3-dihydroxy-3-methylbutanoate + NADP(+) = (2S)-2-acetolactate + NADPH + H(+). It catalyses the reaction (2R,3R)-2,3-dihydroxy-3-methylpentanoate + NADP(+) = (S)-2-ethyl-2-hydroxy-3-oxobutanoate + NADPH + H(+). It participates in amino-acid biosynthesis; L-isoleucine biosynthesis; L-isoleucine from 2-oxobutanoate: step 2/4. It functions in the pathway amino-acid biosynthesis; L-valine biosynthesis; L-valine from pyruvate: step 2/4. In terms of biological role, involved in the biosynthesis of branched-chain amino acids (BCAA). Catalyzes an alkyl-migration followed by a ketol-acid reduction of (S)-2-acetolactate (S2AL) to yield (R)-2,3-dihydroxy-isovalerate. In the isomerase reaction, S2AL is rearranged via a Mg-dependent methyl migration to produce 3-hydroxy-3-methyl-2-ketobutyrate (HMKB). In the reductase reaction, this 2-ketoacid undergoes a metal-dependent reduction by NADPH to yield (R)-2,3-dihydroxy-isovalerate. This Geotalea daltonii (strain DSM 22248 / JCM 15807 / FRC-32) (Geobacter daltonii) protein is Ketol-acid reductoisomerase (NADP(+)).